The following is a 337-amino-acid chain: Glyceraldehyde-3-phosphate dehydrogenase (337 aa).

NAD(+)-binding positions include threonine 11–isoleucine 12 and glycine 110. Serine 139–asparagine 141 is a D-glyceraldehyde 3-phosphate binding site. Residue cysteine 140 is the Nucleophile of the active site. Position 168 (arginine 168) interacts with NAD(+). Histidine 194–glycine 195 contacts D-glyceraldehyde 3-phosphate. Glutamine 301 is an NAD(+) binding site.

This sequence belongs to the glyceraldehyde-3-phosphate dehydrogenase family. In terms of assembly, homotetramer.

It is found in the cytoplasm. The catalysed reaction is D-glyceraldehyde 3-phosphate + phosphate + NADP(+) = (2R)-3-phospho-glyceroyl phosphate + NADPH + H(+). It carries out the reaction D-glyceraldehyde 3-phosphate + phosphate + NAD(+) = (2R)-3-phospho-glyceroyl phosphate + NADH + H(+). It participates in carbohydrate degradation; glycolysis; pyruvate from D-glyceraldehyde 3-phosphate: step 1/5. The chain is Glyceraldehyde-3-phosphate dehydrogenase (gap) from Methanothermobacter thermautotrophicus (strain ATCC 29096 / DSM 1053 / JCM 10044 / NBRC 100330 / Delta H) (Methanobacterium thermoautotrophicum).